The primary structure comprises 62 residues: Large ribosomal subunit protein eL24 (62 aa).

Zn(2+) is bound by residues Cys7, Cys10, Cys33, and Cys37. Residues 7–37 form a C4-type zinc finger; sequence CSFCGKDILPGTGLMYVRNDGSLLWFCSSKC.

The protein belongs to the eukaryotic ribosomal protein eL24 family. Part of the 50S ribosomal subunit. Forms a cluster with proteins L3 and L14. Zn(2+) is required as a cofactor.

In terms of biological role, binds to the 23S rRNA. The sequence is that of Large ribosomal subunit protein eL24 from Sulfolobus acidocaldarius (strain ATCC 33909 / DSM 639 / JCM 8929 / NBRC 15157 / NCIMB 11770).